We begin with the raw amino-acid sequence, 61 residues long: UPF0434 protein Nmul_A1027 (61 aa).

This sequence belongs to the UPF0434 family.

The chain is UPF0434 protein Nmul_A1027 from Nitrosospira multiformis (strain ATCC 25196 / NCIMB 11849 / C 71).